The chain runs to 765 residues: Putative U-box domain-containing protein 50 (765 aa).

Residues glutamine 198–arginine 391 are a coiled coil. Residues serine 422–serine 765 enclose the Protein kinase domain. ATP contacts are provided by residues lysine 428–valine 436 and lysine 449. In terms of domain architecture, U-box spans aspartate 688 to glutamine 762.

This sequence belongs to the protein kinase superfamily. Ser/Thr protein kinase family.

The enzyme catalyses S-ubiquitinyl-[E2 ubiquitin-conjugating enzyme]-L-cysteine + [acceptor protein]-L-lysine = [E2 ubiquitin-conjugating enzyme]-L-cysteine + N(6)-ubiquitinyl-[acceptor protein]-L-lysine.. It participates in protein modification; protein ubiquitination. Its function is as follows. Functions as an E3 ubiquitin ligase. The protein is Putative U-box domain-containing protein 50 (PUB50) of Arabidopsis thaliana (Mouse-ear cress).